A 494-amino-acid chain; its full sequence is Flap endonuclease 1 (494 aa).

The tract at residues 1–106 is N-domain; the sequence is MGIKGLIPFL…KTLEKRRQQR (106 aa). Asp34 lines the Mg(2+) pocket. Positions 47 and 72 each coordinate DNA. The Mg(2+) site is built by Asp88, Glu160, Glu162, Asp181, and Asp183. Residues 124–253 form an I-domain region; that stretch reads SVKKLVGRTV…KTAYSLVKKY (130 aa). Glu160 is a binding site for DNA. Residues Gly231 and Asp233 each coordinate DNA. Asp233 serves as a coordination point for Mg(2+). The segment at 330 to 338 is interaction with PCNA; sequence IQTSLLSFL. Disordered stretches follow at residues 341–382 and 395–426; these read PQHN…ESST and LFCEPSNSDNEEDDRGRVDKNEDLFKKSENET. The span at 408–426 shows a compositional bias: basic and acidic residues; that stretch reads DRGRVDKNEDLFKKSENET.

Belongs to the XPG/RAD2 endonuclease family. FEN1 subfamily. As to quaternary structure, interacts with PCNA. Three molecules of FEN1 bind to one PCNA trimer with each molecule binding to one PCNA monomer. PCNA stimulates the nuclease activity without altering cleavage specificity. Mg(2+) is required as a cofactor. Phosphorylated. Phosphorylation upon DNA damage induces relocalization to the nuclear plasma.

It is found in the nucleus. It localises to the nucleolus. Its subcellular location is the nucleoplasm. The protein localises to the mitochondrion. Structure-specific nuclease with 5'-flap endonuclease and 5'-3' exonuclease activities involved in DNA replication and repair. During DNA replication, cleaves the 5'-overhanging flap structure that is generated by displacement synthesis when DNA polymerase encounters the 5'-end of a downstream Okazaki fragment. It enters the flap from the 5'-end and then tracks to cleave the flap base, leaving a nick for ligation. Also involved in the long patch base excision repair (LP-BER) pathway, by cleaving within the apurinic/apyrimidinic (AP) site-terminated flap. Acts as a genome stabilization factor that prevents flaps from equilibrating into structures that lead to duplications and deletions. Also possesses 5'-3' exonuclease activity on nicked or gapped double-stranded DNA, and exhibits RNase H activity. Also involved in replication and repair of rDNA and in repairing mitochondrial DNA. This Theileria parva (East coast fever infection agent) protein is Flap endonuclease 1.